The following is a 204-amino-acid chain: FMN-dependent NADH:quinone oxidoreductase (204 aa).

Residues Ser9 and Ser15 to Ser17 each bind FMN.

The protein belongs to the azoreductase type 1 family. In terms of assembly, homodimer. The cofactor is FMN.

It catalyses the reaction 2 a quinone + NADH + H(+) = 2 a 1,4-benzosemiquinone + NAD(+). The enzyme catalyses N,N-dimethyl-1,4-phenylenediamine + anthranilate + 2 NAD(+) = 2-(4-dimethylaminophenyl)diazenylbenzoate + 2 NADH + 2 H(+). In terms of biological role, quinone reductase that provides resistance to thiol-specific stress caused by electrophilic quinones. Its function is as follows. Also exhibits azoreductase activity. Catalyzes the reductive cleavage of the azo bond in aromatic azo compounds to the corresponding amines. The protein is FMN-dependent NADH:quinone oxidoreductase of Xanthomonas campestris pv. campestris (strain ATCC 33913 / DSM 3586 / NCPPB 528 / LMG 568 / P 25).